Here is a 267-residue protein sequence, read N- to C-terminus: MLGRAIRSMEVMVHSSTFLLPKLHQPANSPAKKYALVVLNQNLPRFVPRLWTHAKLRICADGGANRIFDEMFQMTNDPDYESTRKRYIPEIIEGDMDSIRPEVKQFYSSQGSKISDKSHNQETTDLHKCISRIHRCTPDHEKTNLCVLVTGALGGRFDHEAANINILYLFSDMRIVLLSDDCLIRLLPKTHKHEIYIESSVEGPHCGLFPVGAPSGSTTTTGLKWNLSEAKMRFGSMISTSNIVHAEKVTVQSDADLLWTISLRNLT.

It belongs to the thiamine pyrophosphokinase family.

It is found in the cytoplasm. The protein resides in the cytosol. The enzyme catalyses thiamine + ATP = thiamine diphosphate + AMP + H(+). It functions in the pathway cofactor biosynthesis; thiamine diphosphate biosynthesis; thiamine diphosphate from thiamine: step 1/1. In terms of biological role, catalyzes the phosphorylation of thiamine to thiamine pyrophosphate (TPP). TPP is an active cofactor for enzymes involved in glycolysis and energy production. Plant leaves require high levels of TPP for photosynthesis and carbohydrate metabolism. This chain is Thiamine pyrophosphokinase 2 (TPK2), found in Oryza sativa subsp. japonica (Rice).